The chain runs to 625 residues: RalA-binding protein 1 (625 aa).

Composition is skewed to basic and acidic residues over residues 1-11 (MDFDSPEEKEF) and 20-60 (ADAK…KDRG). The disordered stretch occupies residues 1–172 (MDFDSPEEKE…SKQLSQQQDD (172 aa)). A phosphoserine mark is found at Ser-68 and Ser-69. Residues 94 to 157 (KSKEKREKSR…EKDKKADKKD (64 aa)) show a composition bias toward basic and acidic residues. A Rho-GAP domain is found at 191 to 385 (VSLATERSRC…PLTSTSPKLP (195 aa)). A disordered region spans residues 443 to 500 (QEKTAEEVDNSSSAPPAVASEDTTDSKPAGTPAVSTNNSISQEEPKTDTLTPKDAPND). A compositionally biased stretch (polar residues) spans 475-484 (AVSTNNSISQ).

In terms of assembly, interacts with CycB and numb.

Functionally, participates in receptor endocytosis during interphase, is also involved in mitotic processes when endocytosis is switched off. The polypeptide is RalA-binding protein 1 (Drosophila melanogaster (Fruit fly)).